Reading from the N-terminus, the 38-residue chain is Large ribosomal subunit protein bL36A (38 aa).

This sequence belongs to the bacterial ribosomal protein bL36 family.

The protein is Large ribosomal subunit protein bL36A of Enterobacter sp. (strain 638).